Reading from the N-terminus, the 202-residue chain is Small ribosomal subunit protein uS4 (202 aa).

Residues 18–44 (LPGLTRKSARREYPPGQHGQGRRKRSE) are disordered. Positions 90–152 (MRLDNTVFRL…DRSRKLIEAN (63 aa)) constitute an S4 RNA-binding domain.

This sequence belongs to the universal ribosomal protein uS4 family. Part of the 30S ribosomal subunit. Contacts protein S5. The interaction surface between S4 and S5 is involved in control of translational fidelity.

Functionally, one of the primary rRNA binding proteins, it binds directly to 16S rRNA where it nucleates assembly of the body of the 30S subunit. With S5 and S12 plays an important role in translational accuracy. This Picosynechococcus sp. (strain ATCC 27264 / PCC 7002 / PR-6) (Agmenellum quadruplicatum) protein is Small ribosomal subunit protein uS4.